We begin with the raw amino-acid sequence, 206 residues long: Large ribosomal subunit protein uL4 (206 aa).

A disordered region spans residues 46-78 (GNRAQKDREQVKHTTKKPWRQKGTGRARAGMSS). Basic residues predominate over residues 58–70 (HTTKKPWRQKGTG).

Belongs to the universal ribosomal protein uL4 family. As to quaternary structure, part of the 50S ribosomal subunit.

Its function is as follows. One of the primary rRNA binding proteins, this protein initially binds near the 5'-end of the 23S rRNA. It is important during the early stages of 50S assembly. It makes multiple contacts with different domains of the 23S rRNA in the assembled 50S subunit and ribosome. Forms part of the polypeptide exit tunnel. In Burkholderia lata (strain ATCC 17760 / DSM 23089 / LMG 22485 / NCIMB 9086 / R18194 / 383), this protein is Large ribosomal subunit protein uL4.